The primary structure comprises 135 residues: MNRFQLLSKGLRLIHKMSEEALAGVPLVHISPEGIFKYVMINVIDGGDASKAVIRGFADCTWHADIFEREEEVFKKLGLRAECPGGGRIEHNPDKKYLKVYGYSQGFGKADHAQTKRILATKYPDYTIEISDEGY.

Substrate is bound at residue K37. Residue H63 is the Proton acceptor of the active site. Position 104–106 (104–106 (SQG)) interacts with substrate.

Belongs to the janus family.

JanA and janB regulate somatic sex differentiation. This is Sex-regulated protein janus-A (janA) from Drosophila simulans (Fruit fly).